The following is a 362-amino-acid chain: Dihydroorotate dehydrogenase (quinone) (362 aa).

Residues 62–66 and T86 each bind FMN; that span reads AGYDK. A substrate-binding site is contributed by K66. 111 to 115 is a binding site for substrate; sequence NRLGF. N139 and N170 together coordinate FMN. N170 contributes to the substrate binding site. Catalysis depends on S173, which acts as the Nucleophile. N175 contacts substrate. FMN-binding residues include K215 and S243. Residue 244 to 245 participates in substrate binding; sequence NT. Residues G266, G295, and 316–317 each bind FMN; that span reads YS.

It belongs to the dihydroorotate dehydrogenase family. Type 2 subfamily. Monomer. FMN serves as cofactor.

Its subcellular location is the cell membrane. It carries out the reaction (S)-dihydroorotate + a quinone = orotate + a quinol. The protein operates within pyrimidine metabolism; UMP biosynthesis via de novo pathway; orotate from (S)-dihydroorotate (quinone route): step 1/1. Catalyzes the conversion of dihydroorotate to orotate with quinone as electron acceptor. The chain is Dihydroorotate dehydrogenase (quinone) from Rhizobium meliloti (strain 1021) (Ensifer meliloti).